The sequence spans 576 residues: MNIQALLSDKVSQALIAAGAPADCEAQVRQSAKAQFGDYQANGVMAVAKKLGMQPRQLAERVVELLDLTGIASKIEIAGPGFINIFLDRQWVAEKVEYALTAPKLGVAPVEPQTIVVDYSAPNVAKQMHVGHLRSTIIGDAAVRTLAFLGHNVIRANHVGDWGTQFGMLIAYLEKMQNENASDMGLSDLELFYQQAKKTYDEDEEFALRARAYVVKLQSGDEYCRQMWRKLVDITMAQNQVAYDRLNVTLTKDDVMGESLYNAMLPEIVADLKAKGLAVESEGATVVYLDEYKNKDGEPMGVIIQKKDGGYLYTTTDIACAKYRYETLGADRILYYIDSRQHQHLMQAWTIVRKAGYVPESVPLEHHMFGMMLGKDGKPFKTRSGGTVKLSDLLDEAVERAGKLIAEKNPDMPADELKQVINAVGIGAVKYADLSKSRTTDYIFDWDNMLALDGNTAPYMQYAYTRVVSVFRRAGVDETSLTLPLVITEDREAALATRLLQFEEIITTVAREGTPHVMCSYLYDLAGLFSSFYEHCQILNAESEEIRQSRLKLAMLTAKTLKQGLDTLGIQTVERM.

Positions 122–132 match the 'HIGH' region motif; it reads PNVAKQMHVGH.

The protein belongs to the class-I aminoacyl-tRNA synthetase family. Monomer.

Its subcellular location is the cytoplasm. The catalysed reaction is tRNA(Arg) + L-arginine + ATP = L-arginyl-tRNA(Arg) + AMP + diphosphate. This Yersinia pseudotuberculosis serotype I (strain IP32953) protein is Arginine--tRNA ligase.